We begin with the raw amino-acid sequence, 199 residues long: NAD(P)H dehydrogenase (quinone) (199 aa).

One can recognise a Flavodoxin-like domain in the interval Val-4 to Val-190. Residues Ser-10–Ile-15 and Thr-78–Tyr-80 each bind FMN. Tyr-12 serves as a coordination point for NAD(+). Substrate is bound at residue Trp-98. Residues Ser-113 to Gly-119 and His-134 contribute to the FMN site.

This sequence belongs to the WrbA family. Requires FMN as cofactor.

The catalysed reaction is a quinone + NADH + H(+) = a quinol + NAD(+). The enzyme catalyses a quinone + NADPH + H(+) = a quinol + NADP(+). The sequence is that of NAD(P)H dehydrogenase (quinone) from Paraburkholderia phymatum (strain DSM 17167 / CIP 108236 / LMG 21445 / STM815) (Burkholderia phymatum).